The sequence spans 586 residues: Capsid scaffolding protein (586 aa).

Residues histidine 53, serine 123, and histidine 142 each act as charge relay system in the active site. Over residues 251-263 (SEETPENAIKDRS) the composition is skewed to basic and acidic residues. Disordered stretches follow at residues 251–288 (SEET…HVPA), 330–364 (ARRD…DIWP), 458–486 (NKRD…YFPG), and 530–586 (SASN…MMAD). Over residues 264–284 (VSTQTAPSFDISESQQPSGQT) the composition is skewed to polar residues. The interval 312–331 (EDMVYVPFEKYASLLAASAR) is interaction with pAP. Interaction with major capsid protein stretches follow at residues 566–586 (DAQT…MMAD) and 567–586 (AQTK…MMAD).

The protein belongs to the herpesviridae capsid scaffolding protein family. Homomultimer. Interacts with major capsid protein. As to quaternary structure, exists in a monomer-dimer equilibrium with the dimer being the active species. Capsid scaffolding protein is cleaved by assemblin after formation of the spherical procapsid. As a result, the capsid obtains its mature, icosahedral shape. Cleavages occur at two or more sites: release (R-site) and maturation (M-site).

It is found in the host cytoplasm. The protein resides in the host nucleus. The catalysed reaction is Cleaves -Ala-|-Ser- and -Ala-|-Ala- bonds in the scaffold protein.. In terms of biological role, acts as a scaffold protein by binding major capsid protein in the cytoplasm, inducing the nuclear localization of both proteins. Multimerizes in the nucleus such as major capsid protein forms the icosahedral T=16 capsid. Autocatalytic cleavage releases the assembly protein, and subsequently abolishes interaction with major capsid protein. Cleavages products are evicted from the capsid before or during DNA packaging. Functionally, protease that plays an essential role in virion assembly within the nucleus. Catalyzes the cleavage of the assembly protein after formation of the spherical procapsid. By that cleavage, the capsid matures and gains its icosahedral shape. The cleavage sites seem to include -Ala-Ser-, -Ala-Ala-, as well as Ala-Thr bonds. Assemblin and cleavages products are evicted from the capsid before or during DNA packaging. Its function is as follows. Plays a major role in capsid assembly. Acts as a scaffold protein by binding major capsid protein. Multimerizes in the nucleus such as major capsid protein forms the icosahedral T=16 capsid. Cleaved by assemblin after capsid completion. The cleavages products are evicted from the capsid before or during DNA packaging. The polypeptide is Capsid scaffolding protein (Gallus gallus (Chicken)).